The following is a 393-amino-acid chain: MLPSLQESLDGDEKELESSEEGGSAEERRLEPPPSSHYCLYSFRGSRLTQNRGDSDDGRSGGINAETPSGDDFSLSLVDTNLPSEVEPELRSFIAKRLSKGAVFEGLGNVASVELRIPGYRVGCYYCLFQQEKLLPEIAAMESEHNPSEYVVCFLGGSEKGLELFRLELDKYIQGLKNNMNCEERSLGNDVKSYLNSWYEDVVCPIQRVVLLFQEKLTFLLHAALSYTPVEFKESDEKTKRDINRFLSVASLQGLIHEGTMTSLCMAMTEEQHKSVIIDCSGPQPQFHNAGSNRFCEDWMQAFLHGAEAGNPFLFRQVLENFKLKAIQDTNNLKRFIRQAEMNHYALFKCYMFLKNCGSGDILLKIVKVEHEEMPEAKSVVAVLEEFMREALV.

Positions 1–74 (MLPSLQESLD…AETPSGDDFS (74 aa)) are disordered. Phosphoserine is present on residues Ser8 and Ser18. The segment covering 9-24 (LDGDEKELESSEEGGS) has biased composition (acidic residues).

As to quaternary structure, interacts with TBC1D23; this interaction may be indirect.

In terms of biological role, may have a role in spermatogenesis. The protein is Protein Njmu-R1 of Mus musculus (Mouse).